Here is a 623-residue protein sequence, read N- to C-terminus: Glutathione import ATP-binding protein GsiA (623 aa).

2 ABC transporter domains span residues 15–269 (VENL…RALL) and 314–564 (LRVR…RKLL). Residues 49 to 56 (GESGSGKS) and 357 to 364 (GESGSGKS) contribute to the ATP site.

The protein belongs to the ABC transporter superfamily. Glutathione importer (TC 3.A.1.5.11) family. The complex is composed of two ATP-binding proteins (GsiA), two transmembrane proteins (GsiC and GsiD) and a solute-binding protein (GsiB).

The protein localises to the cell inner membrane. It carries out the reaction glutathione(out) + ATP + H2O = glutathione(in) + ADP + phosphate + H(+). In terms of biological role, part of the ABC transporter complex GsiABCD involved in glutathione import. Responsible for energy coupling to the transport system. In Shigella boydii serotype 4 (strain Sb227), this protein is Glutathione import ATP-binding protein GsiA.